Reading from the N-terminus, the 340-residue chain is DNA repair protein RAD51 homolog B (340 aa).

Residues 1–22 (MSSSSAHQKASPPIEEEATEHG) are disordered. A HhH domain is found at 49–78 (TVESVAYSPRKDLLQIKGISEAKVDKIIEA). 128 to 135 (GEFRSGKT) contacts ATP.

Belongs to the RecA family. RAD51 subfamily. As to quaternary structure, self-associates and may interact with XRCC3 homolog. Highly expressed in mitotic and meiotic tissues, but low levels in differentiated tissues.

Its subcellular location is the nucleus. Functionally, binds to single and double-stranded DNA and exhibits DNA-dependent ATPase activity. Unwinds duplex DNA. Component of the meiotic recombination pathway. Seems to play a role in mediating chromosome homology search, chromosome pairing and synapsis at early stages and probably chromosome crossing-over at later stages in meiosis. Probably is involved in the repair of meiotic double strand breaks (DBSs) and in homologous recombination. The polypeptide is DNA repair protein RAD51 homolog B (RAD51B) (Zea mays (Maize)).